The following is a 1026-amino-acid chain: MKFFALFIHRPVATLLLTLAIALCGVLGFRLLPVSPLPQVDFPVISVSASLAGASPETMASAVATPLERALGRIAGVSEMTSTSSLGSTRVILVFNLDRDINGAARDVQAAINAAQNLLPSGMSSRPTYRKVNPSDAPVMILTLTSDTYSQGQLYDFASTQLSQKISQMEGVGDVSIGGSSLPAVRVALNPVALFNQGISLDEVRQAIAQANVRQPLGNVENSQKRWQIQTNDELKTADAYAPLIIHYSNGAAVRLSDVATVEDSVQNSRNAGMANSKPAILVMIRRAPDANIITTVDNIRAAMPELRASLPAEIQLDVAQDRSPTIRASLAEVEQSLIIAVALVILVVFLFLRSWRATAIPALAVPVSLIGTFAAMYLCGFSLNNLSLMALTIATGFVVDDAIVVLENISRHIEAGMKPLQASLQGVREVGFTVLSMSLSLVAVFLPLLLMDGLPGRLFREFAVTLSVAIMISLLISLTLTPMLCARLLRAVPKRSQPRTQGFNRVLLAMQQGYGRSLKWVLNHARWVLLLLLGTIALNVWLYISIPKTFFPEQDTGRMMGFIQADQSISFQAMTVKLQNFMTIVSSDPAVDNVNGFTGGSRTNSGSMFISLKPLSERDVSAQQVISRLRIKLAKEPGANLFLMPVQDIRIGGREANAGYQYTLLSDDLNELRTWEPKIRAAFSKLPELADVNSDQQDKGAEMALTYDRDAMAQLGISVSAANALLNNAFGQRQISTIYQPLNQYKVVMEVDDAYTQDVSSLDKMFVINSDNKPIPLSYFASWKPINAPLSVNHQGLSAASTISFNLPEGTDLSSATAAIERTMTSLGVPSSVRGQFSGTAQAFQQSQSSQLLLILAAIITVYIVLGILYESYVHPLTILSTLPSAGVGALLALEWFGAPFSLVALIGIMLLIGIVKKNAIMMVDFALVAQRSGKLSAQDAIFQACLLRFRPIMMTTLAALFGALPLVLTSGDGAELRQPLGITIVGGLLMSQVLTLYTTPVVYLFFDKLRTIRRKAPEKDLSLS.

A run of 10 helical transmembrane segments spans residues 12–34 (VATLLLTLAIALCGVLGFRLLPV), 336–353 (QSLIIAVALVILVVFLFL), 360–382 (AIPALAVPVSLIGTFAAMYLCGF), 431–450 (VGFTVLSMSLSLVAVFLPLL), 463–485 (FAVTLSVAIMISLLISLTLTPML), 525–547 (HARWVLLLLLGTIALNVWLYISI), 853–875 (LLLILAAIITVYIVLGILYESYV), 895–917 (LEWFGAPFSLVALIGIMLLIGIV), 948–970 (LLRFRPIMMTTLAALFGALPLVL), and 985–1007 (TIVGGLLMSQVLTLYTTPVVYLF).

This sequence belongs to the resistance-nodulation-cell division (RND) (TC 2.A.6) family. MdtC subfamily. In terms of assembly, part of a tripartite efflux system composed of MdtA, MdtB and MdtC. MdtC forms a heteromultimer with MdtB.

It is found in the cell inner membrane. In Pectobacterium atrosepticum (strain SCRI 1043 / ATCC BAA-672) (Erwinia carotovora subsp. atroseptica), this protein is Multidrug resistance protein MdtC.